Consider the following 821-residue polypeptide: Lon protease (821 aa).

One can recognise a Lon N-terminal domain in the interval 18–216 (LPLMSLREVV…KVYELLQGEI (199 aa)). 368–375 (GPPGVGKT) is a binding site for ATP. Positions 606–787 (TSQVGVCTGL…DEVLPQALMA (182 aa)) constitute a Lon proteolytic domain. Active-site residues include serine 693 and lysine 736.

The protein belongs to the peptidase S16 family. As to quaternary structure, homohexamer. Organized in a ring with a central cavity.

The protein resides in the cytoplasm. The enzyme catalyses Hydrolysis of proteins in presence of ATP.. ATP-dependent serine protease that mediates the selective degradation of mutant and abnormal proteins as well as certain short-lived regulatory proteins. Required for cellular homeostasis and for survival from DNA damage and developmental changes induced by stress. Degrades polypeptides processively to yield small peptide fragments that are 5 to 10 amino acids long. Binds to DNA in a double-stranded, site-specific manner. This chain is Lon protease, found in Nitratidesulfovibrio vulgaris (strain ATCC 29579 / DSM 644 / CCUG 34227 / NCIMB 8303 / VKM B-1760 / Hildenborough) (Desulfovibrio vulgaris).